The chain runs to 1081 residues: MVSPPGVLSSLLLLAAMAGGSSQQCSEGRTYSDAIISPNLESIRIMRVSHTFSVGDCTAACCDLPSCDLAWWFEGSCYLVNCMRPENCEPRTTGPIRSYLTFVRRPVQRSGQLLDYGDMMLGRGSPSGAWGDSLEDLRKDLPFLGKDGGPEETAEYSDDYKELERGLLQPSNQQDPRGSAEYPDWSLLPSSDGDFNASATGDNSAASTEKLQDLTPYPLDQEQLQSLNESTWSPTPRHSEMSSMWPSSVTASPTEEGLEGEETLQLQEQPNNSSGKKVPMPSHNPSPASLESSPTTVEKSSIFTVTPWSRDPGTPTFPASTVLPGLISPSWPLSPTTSRTVKALAVSAGDNLVLTLPNGEAELKASVEPAPPADTAYTYEWSLMSHPVDFQGKIKQENKPTLHLSQLSVGLYAFRVAVSGENAFGEGYVNVTVMPAARINQPPVAIVSPQIQELSLPLTSALIDGSQSTDDAEIVSYHWEEVDGPFLGEAFLDDSPLLRLSNLDPGNYTFRLTITDSDGATNSTTAALIIRGSLDYPPVANAGPNQTITLPQNTIILNGNQSSDDHQIVLYEWFPDPGGESKEMVMQGAQTPYLHLSELQEGEYTFQLMVTDSSGQQSTALVTLTVQAENNQAPVAVAGPDKELVFPVQSAMLDGSRSSDDHGIVCYRWEHIRGPSAVEMENVDKAIATVTGLQVGTYHFRLTVRDQQGLSSTSTLTVAVKKENNSPPRAQAGGRHVLMLPNNSITLDGSRSTDDRGIVSYLWIRDGQSPAAGDIIGSSDNGAALQLTNLVEGVYTFHLLVTDSQGASDSDTAIVEVLPDPKKDGMVELILQVGVEQLTEQQKETLVRQLAVLLNVLDSDVKVLKIQAHTDVSTVIVFYVQSGSPFKVLRAADVARNLHKRLSKEKGAFLLFKVLRIDTAGCLLKCSGHGHCDPITKRCICSQLWMENLLQRYMWDGESNCEWSVFYVAALALTLTVLTGAVTWVCICCCRRRKRTKIRKKTKYTILDNMDEQERMELRPKYGIKHRSTEHNSSLMVSESEFESDQDTLFSQERMERGVLKGSLNGSARSGVSFGYYSKDR.

Positions 1–22 (MVSPPGVLSSLLLLAAMAGGSS) are cleaved as a signal peptide. One can recognise an MANSC domain in the interval 23 to 99 (QQCSEGRTYS…PRTTGPIRSY (77 aa)). At 23 to 964 (QQCSEGRTYS…WDGESNCEWS (942 aa)) the chain is on the extracellular side. Disordered stretches follow at residues 141–160 (LPFL…SDDY), 168–216 (LQPS…DLTP), and 228–298 (NEST…TTVE). 3 stretches are compositionally biased toward polar residues: residues 197–209 (ASAT…ASTE), 228–253 (NEST…TASP), and 283–298 (HNPS…TTVE). PKD domains are found at residues 345–436 (AVSA…VMPA), 444–533 (VAIV…IRGS), 539–629 (VANA…VQAE), 630–723 (NNQA…VKKE), and 729–820 (RAQA…VLPD). 2 N-linked (GlcNAc...) asparagine glycosylation sites follow: N430 and N522. Residues 965-985 (VFYVAALALTLTVLTGAVTWV) form a helical membrane-spanning segment. Over 986–1081 (CICCCRRRKR…VSFGYYSKDR (96 aa)) the chain is Cytoplasmic. Positions 1004–1007 (YTIL) match the Endocytosis signal motif.

In terms of assembly, homodimer. Interacts with AP2M1; required for clathrin-mediated endocytosis. Post-translationally, N-glycosylated. O-glycosylated. In terms of processing, shedding of the extracellular domain and intramembrane cleavage produce several proteolytic products. The intramembrane cleavage releases a soluble cytoplasmic polypeptide that translocates to the nucleolus. In terms of tissue distribution, highly expressed during development in ventricular zone, intermediate zone, cortical plate, striatum, hippocampus, and brain stem.

Its subcellular location is the cell membrane. It is found in the early endosome membrane. Functionally, involved in neuronal migration during development of the cerebral neocortex. May function in a cell autonomous and a non-cell autonomous manner and play a role in appropriate adhesion between migrating neurons and radial glial fibers. May also regulate growth and differentiation of dendrites. This chain is Dyslexia-associated protein KIAA0319 homolog, found in Rattus norvegicus (Rat).